A 170-amino-acid chain; its full sequence is Protein SOB FIVE-LIKE 5 (170 aa).

Residues 10 to 15 carry the SOFL-A motif; sequence SGWTLY. The disordered stretch occupies residues 17 to 78; the sequence is DQSVSSPSPS…GPRNISEEDS (62 aa). Positions 35–44 are enriched in basic and acidic residues; sequence DSRRRSKDSW. Positions 61-70 match the SOFL-B motif; it reads SMISDASSGP. The Nuclear localization signal motif lies at 79 to 86; it reads VKKINIVG.

Belongs to the SOFL plant protein family. As to expression, expressed in seedlings, roots, flowers and siliques. Barely detectable in leaves.

It is found in the cytoplasm. The protein localises to the nucleus. Its function is as follows. Involved in cytokinin-mediated development. In Arabidopsis thaliana (Mouse-ear cress), this protein is Protein SOB FIVE-LIKE 5.